The chain runs to 439 residues: Ribosomal protein uS12 methylthiotransferase RimO (439 aa).

Positions 5–115 constitute an MTTase N-terminal domain; the sequence is PKIGFVSLGC…LIEAVHTHAP (111 aa). Positions 14, 50, 79, 146, 150, and 153 each coordinate [4Fe-4S] cluster. The region spanning 132–369 is the Radical SAM core domain; sequence LTPRHYSYLK…MGLQAQISAD (238 aa). The TRAM domain maps to 372–439; that stretch reads QRFVGTEQQV…ESTEYDLIAD (68 aa).

The protein belongs to the methylthiotransferase family. RimO subfamily. It depends on [4Fe-4S] cluster as a cofactor.

The protein resides in the cytoplasm. The enzyme catalyses L-aspartate(89)-[ribosomal protein uS12]-hydrogen + (sulfur carrier)-SH + AH2 + 2 S-adenosyl-L-methionine = 3-methylsulfanyl-L-aspartate(89)-[ribosomal protein uS12]-hydrogen + (sulfur carrier)-H + 5'-deoxyadenosine + L-methionine + A + S-adenosyl-L-homocysteine + 2 H(+). In terms of biological role, catalyzes the methylthiolation of an aspartic acid residue of ribosomal protein uS12. This chain is Ribosomal protein uS12 methylthiotransferase RimO, found in Francisella philomiragia subsp. philomiragia (strain ATCC 25017 / CCUG 19701 / FSC 153 / O#319-036).